Reading from the N-terminus, the 176-residue chain is Heme oxygenase HutZ (176 aa).

Residue histidine 170 coordinates heme.

The protein belongs to the heme oxygenase HugZ/HutZ family. In terms of assembly, homodimer. Interacts with HutX, leading to the transfer of the heme from HutX to apo-HutZ.

It carries out the reaction heme b + 3 AH2 + 3 O2 + 2 H(+) = biliverdin IXbeta + CO + Fe(2+) + 3 A + 3 H2O. The enzyme catalyses heme b + 3 AH2 + 3 O2 + 3 H(+) = biliverdin IXdelta + CO + Fe(2+) + 3 A + 3 H2O. With respect to regulation, activity is pH-dependent. A proximal hydrogen bond between Asp-132 and the heme axial ligant His-170 is essential for heme degradation activity. Heme-degradation reaction is inhibited by iron chelators. In terms of biological role, involved in heme degradation. Catalyzes the degradation of heme to biliverdin, with the release of iron. Forms biliverdin beta and delta. Binds heme with high efficiency. In Vibrio cholerae serotype O1 (strain ATCC 39315 / El Tor Inaba N16961), this protein is Heme oxygenase HutZ.